The primary structure comprises 366 residues: Transcription factor MYB61 (366 aa).

2 consecutive HTH myb-type domains span residues 9–61 and 62–116; these read KQKL…INYL and RPDL…KKKL. 2 DNA-binding regions (H-T-H motif) span residues 37-61 and 89-112; these read WSSV…INYL and WSQI…NSSI. The disordered stretch occupies residues 115–164; the sequence is KLKQRGIDPNTHKPISEVESFSDKDKPTTSNNKRSGNDHKSPSSSSATNQ. The segment covering 124 to 141 has biased composition (basic and acidic residues); sequence NTHKPISEVESFSDKDKP.

In terms of tissue distribution, expressed specifically in guard cells. Expressed in sink tissues, such as xylem, roots and developing seeds.

The protein localises to the nucleus. Functionally, transcription factor that coordinates a small network of downstream target genes required for several aspects of plant growth and development, such as xylem formation and xylem cell differentiation, and lateral root formation. Regulates a specific set of target genes by binding DNA to the AC cis-element 5'-ACCTAC-3'. Functions as a transcriptional regulator of stomatal closure. Plays a role the regulation of stomatal pore size independently of abscisic acid (ABA). Required for seed coat mucilage deposition during the development of the seed coat epidermis. Involved in the induction of trichome initiation and branching by positively regulating GL1 and GL2. Required for gibberellin (GA) biosynthesis and degradation by positively affecting the expression of the enzymes that convert GA9 into the bioactive GA4, as well as the enzymes involved in the degradation of GA4. In Arabidopsis thaliana (Mouse-ear cress), this protein is Transcription factor MYB61.